Reading from the N-terminus, the 267-residue chain is Apolipoprotein A-I (267 aa).

The first 18 residues, 1 to 18, serve as a signal peptide directing secretion; sequence MKAAVLTLAVLFLTGSQA. 2 tandem repeats follow at residues 68–89 and 90–111. Residues 68-267 are 10 X approximate tandem repeats; it reads LKLLDNWDSL…EEYAKKLSSQ (200 aa). Position 110 is a methionine sulfoxide (Met-110). A 3; half-length repeat occupies 112–122; the sequence is KDLEEVKAKVQ. 5 tandem repeats follow at residues 123-144, 145-166, 167-188, 189-210, and 211-232. A 9; half-length repeat occupies 233 to 243; it reads PALEDLRQGLL. Residues 244–267 form repeat 10; that stretch reads PVLESFKVSFLSALEEYAKKLSSQ.

It belongs to the apolipoprotein A1/A4/E family. In terms of assembly, homodimer. Interacts with APOA1BP and CLU. Component of a sperm activating protein complex (SPAP), consisting of APOA1, an immunoglobulin heavy chain, an immunoglobulin light chain and albumin. Interacts with NDRG1. Interacts with SCGB3A2. Interacts with NAXE and YJEFN3. Glycosylated. In terms of processing, palmitoylated. Post-translationally, phosphorylation sites are present in the extracellular medium.

The protein localises to the secreted. In terms of biological role, participates in the reverse transport of cholesterol from tissues to the liver for excretion by promoting cholesterol efflux from tissues and by acting as a cofactor for the lecithin cholesterol acyltransferase (LCAT). As part of the SPAP complex, activates spermatozoa motility. The sequence is that of Apolipoprotein A-I (APOA1) from Cebus imitator (Panamanian white-faced capuchin).